A 455-amino-acid polypeptide reads, in one-letter code: Glycylpeptide N-tetradecanoyltransferase (455 aa).

Residue 38–41 (HKFW) participates in tetradecanoyl-CoA binding. Positions 168-204 (INFLCVHKQLRSKRLTPVLIKEITRRVNKCDIWHALY) are myristoyl CoA-binding. The active-site Proton acceptor; via carboxylate is L455.

This sequence belongs to the NMT family. As to quaternary structure, monomer. In terms of processing, the N-terminus is blocked.

The protein resides in the cytoplasm. The catalysed reaction is N-terminal glycyl-[protein] + tetradecanoyl-CoA = N-tetradecanoylglycyl-[protein] + CoA + H(+). With respect to regulation, inhibited by diethylpyrocarbonate. Competitively inhibited by S-(2-oxo)pentadecyl-CoA, a non hydrolysable myristoyl-CoA analog, and by SC-58272, a peptidomimetic derived from the N-terminal sequence of a natural substrate. Its function is as follows. Adds a myristoyl group to the N-terminal glycine residue of certain cellular proteins. Substrate specificity requires an N-terminal glycine in the nascent polypeptide substrates. Uncharged amino acids are preferred at position 2 while neutral residues are favored at positions 3 and 4. Ser is present at position 5 in almost all known N-myristoyl proteins and Lys is commonly encountered at postion 6. This Saccharomyces cerevisiae (strain ATCC 204508 / S288c) (Baker's yeast) protein is Glycylpeptide N-tetradecanoyltransferase (NMT1).